Consider the following 393-residue polypeptide: Yellow-related salivary protein SP03B (393 aa).

The signal sequence occupies residues 1-18 (MKIFLCLIAVVFLQGVVG). N-linked (GlcNAc...) asparagine glycosylation is present at Asn29.

Belongs to the major royal jelly protein family. As to expression, female salivary gland (at protein level).

It localises to the secreted. Its function is as follows. Probably modulates blood feeding of sand flies on vertebrate species by binding and sequestering different mediators involved in the host response. Binds biogenic amines. Binds serotonin with high affinity. Poorly binds histamine. Does not bind dopamine, noradrenaline, adrenaline and octopamine. This is Yellow-related salivary protein SP03B from Phlebotomus perniciosus (Phlebotomine sand fly).